The chain runs to 424 residues: MRLSNYYIPTLKETSADVSVVSHKYSIRAGLIKQIASGIYTWLPLGLRVLRNIENIVREEMNKSGALEVLMPLIQPASLWKESGRYDDYGSEMLRITDRNQREMLFGPTHEEVITDTLRTTLTSHKNLPITLYQIQWKFRDELRPRYGIMRCREFLMKDAYSFDKDLSGAILSYNLMFKTYIKIFKNLGLTPIAVKAESGPIGGNLSHEFHVLANSGESTLYYDQEIIELMNSDNIDIERIKNTYTAADDMHDPQTCPIPPNNIKTSKGIEIGHIFYLGDKYSKPMNANFCDNNDSKPLQMGCYGIGISRLVAAIIEVFHDNKGITWPEEISPFKFSLVNLYSSNDKCIKVAENLHMQLHNDVLYDDTDDSPGIKLTRTDLLGMPWQIIIGKSTVEQDLIEVRNRSNKDKFLISVEQFLKKFKK.

This sequence belongs to the class-II aminoacyl-tRNA synthetase family. ProS type 2 subfamily. As to quaternary structure, homodimer.

It is found in the cytoplasm. It catalyses the reaction tRNA(Pro) + L-proline + ATP = L-prolyl-tRNA(Pro) + AMP + diphosphate. Catalyzes the attachment of proline to tRNA(Pro) in a two-step reaction: proline is first activated by ATP to form Pro-AMP and then transferred to the acceptor end of tRNA(Pro). The protein is Proline--tRNA ligase of Ehrlichia canis (strain Jake).